Reading from the N-terminus, the 330-residue chain is Ketol-acid reductoisomerase (NADP(+)) (330 aa).

Positions 2-182 constitute a KARI N-terminal Rossmann domain; the sequence is VKIFYDKDVT…GLTKVGVIQT (181 aa). NADP(+) is bound by residues 25 to 28, R48, S53, and 83 to 86; these read YGSQ and DEVQ. H108 is a catalytic residue. G134 is a binding site for NADP(+). Positions 183–328 constitute a KARI C-terminal knotted domain; sequence TFREETETDL…KELRKMCGLE (146 aa). Mg(2+)-binding residues include D191, E195, E227, and E231. Position 252 (S252) interacts with substrate.

The protein belongs to the ketol-acid reductoisomerase family. Requires Mg(2+) as cofactor.

The catalysed reaction is (2R)-2,3-dihydroxy-3-methylbutanoate + NADP(+) = (2S)-2-acetolactate + NADPH + H(+). The enzyme catalyses (2R,3R)-2,3-dihydroxy-3-methylpentanoate + NADP(+) = (S)-2-ethyl-2-hydroxy-3-oxobutanoate + NADPH + H(+). It participates in amino-acid biosynthesis; L-isoleucine biosynthesis; L-isoleucine from 2-oxobutanoate: step 2/4. It functions in the pathway amino-acid biosynthesis; L-valine biosynthesis; L-valine from pyruvate: step 2/4. In terms of biological role, involved in the biosynthesis of branched-chain amino acids (BCAA). Catalyzes an alkyl-migration followed by a ketol-acid reduction of (S)-2-acetolactate (S2AL) to yield (R)-2,3-dihydroxy-isovalerate. In the isomerase reaction, S2AL is rearranged via a Mg-dependent methyl migration to produce 3-hydroxy-3-methyl-2-ketobutyrate (HMKB). In the reductase reaction, this 2-ketoacid undergoes a metal-dependent reduction by NADPH to yield (R)-2,3-dihydroxy-isovalerate. The protein is Ketol-acid reductoisomerase (NADP(+)) of Methanocaldococcus jannaschii (strain ATCC 43067 / DSM 2661 / JAL-1 / JCM 10045 / NBRC 100440) (Methanococcus jannaschii).